Reading from the N-terminus, the 119-residue chain is Flagellar transcriptional regulator FlhD (119 aa).

This sequence belongs to the FlhD family. Homodimer; disulfide-linked. Forms a heterohexamer composed of two FlhC and four FlhD subunits. Each FlhC binds a FlhD dimer, forming a heterotrimer, and a hexamer assembles by dimerization of two heterotrimers.

It is found in the cytoplasm. Functionally, functions in complex with FlhC as a master transcriptional regulator that regulates transcription of several flagellar and non-flagellar operons by binding to their promoter region. Activates expression of class 2 flagellar genes, including fliA, which is a flagellum-specific sigma factor that turns on the class 3 genes. Also regulates genes whose products function in a variety of physiological pathways. In Escherichia fergusonii (strain ATCC 35469 / DSM 13698 / CCUG 18766 / IAM 14443 / JCM 21226 / LMG 7866 / NBRC 102419 / NCTC 12128 / CDC 0568-73), this protein is Flagellar transcriptional regulator FlhD.